Consider the following 354-residue polypeptide: S-adenosylmethionine:tRNA ribosyltransferase-isomerase (354 aa).

It belongs to the QueA family. As to quaternary structure, monomer.

It localises to the cytoplasm. The enzyme catalyses 7-aminomethyl-7-carbaguanosine(34) in tRNA + S-adenosyl-L-methionine = epoxyqueuosine(34) in tRNA + adenine + L-methionine + 2 H(+). It functions in the pathway tRNA modification; tRNA-queuosine biosynthesis. In terms of biological role, transfers and isomerizes the ribose moiety from AdoMet to the 7-aminomethyl group of 7-deazaguanine (preQ1-tRNA) to give epoxyqueuosine (oQ-tRNA). The chain is S-adenosylmethionine:tRNA ribosyltransferase-isomerase from Salmonella heidelberg (strain SL476).